Reading from the N-terminus, the 245-residue chain is tRNA pseudouridine synthase A (245 aa).

Aspartate 52 acts as the Nucleophile in catalysis. Residue tyrosine 111 participates in substrate binding.

This sequence belongs to the tRNA pseudouridine synthase TruA family. In terms of assembly, homodimer.

The enzyme catalyses uridine(38/39/40) in tRNA = pseudouridine(38/39/40) in tRNA. In terms of biological role, formation of pseudouridine at positions 38, 39 and 40 in the anticodon stem and loop of transfer RNAs. The polypeptide is tRNA pseudouridine synthase A (Wolbachia pipientis wMel).